A 329-amino-acid chain; its full sequence is uncharacterized protein (329 aa).

The stretch at 56-247 (LNKEEQFQED…EAEKTHQAKL (192 aa)) forms a coiled coil.

This is an uncharacterized protein from Bos taurus (Bovine).